The primary structure comprises 212 residues: Imidazole glycerol phosphate synthase subunit HisH (212 aa).

A Glutamine amidotransferase type-1 domain is found at 2–212 (LTAIIDYESG…MIGNFLTWTP (211 aa)). Cysteine 87 serves as the catalytic Nucleophile. Catalysis depends on residues histidine 192 and glutamate 194.

Heterodimer of HisH and HisF.

Its subcellular location is the cytoplasm. The enzyme catalyses 5-[(5-phospho-1-deoxy-D-ribulos-1-ylimino)methylamino]-1-(5-phospho-beta-D-ribosyl)imidazole-4-carboxamide + L-glutamine = D-erythro-1-(imidazol-4-yl)glycerol 3-phosphate + 5-amino-1-(5-phospho-beta-D-ribosyl)imidazole-4-carboxamide + L-glutamate + H(+). It catalyses the reaction L-glutamine + H2O = L-glutamate + NH4(+). Its pathway is amino-acid biosynthesis; L-histidine biosynthesis; L-histidine from 5-phospho-alpha-D-ribose 1-diphosphate: step 5/9. In terms of biological role, IGPS catalyzes the conversion of PRFAR and glutamine to IGP, AICAR and glutamate. The HisH subunit catalyzes the hydrolysis of glutamine to glutamate and ammonia as part of the synthesis of IGP and AICAR. The resulting ammonia molecule is channeled to the active site of HisF. In Ruegeria pomeroyi (strain ATCC 700808 / DSM 15171 / DSS-3) (Silicibacter pomeroyi), this protein is Imidazole glycerol phosphate synthase subunit HisH.